The primary structure comprises 244 residues: PHD finger protein ALFIN-LIKE 2 (244 aa).

Over residues 137–148 the composition is skewed to basic and acidic residues; it reads LSDRKHGRDNKS. A disordered region spans residues 137 to 178; sequence LSDRKHGRDNKSGADNGSKSRHSGKRANDVQTKTSRPAVVDD. Residues 187–239 form a PHD-type zinc finger; it reads ETLCGTCGGRYNANEFWIGCDICERWFHGKCVRITPAKAEHIKHYKCPDCSSS.

This sequence belongs to the Alfin family. As to quaternary structure, interacts with H3K4me3 and to a lesser extent with H3K4me2.

It localises to the nucleus. Functionally, histone-binding component that specifically recognizes H3 tails trimethylated on 'Lys-4' (H3K4me3), which mark transcription start sites of virtually all active genes. The chain is PHD finger protein ALFIN-LIKE 2 from Oryza sativa subsp. indica (Rice).